The sequence spans 471 residues: Glutamate--tRNA ligase (471 aa).

A 'HIGH' region motif is present at residues 9–19 (PSPTGYLHVGG). Residues C98, C100, C125, and D127 each coordinate Zn(2+). Residues 237–241 (KLSKR) carry the 'KMSKS' region motif. K240 contacts ATP.

Belongs to the class-I aminoacyl-tRNA synthetase family. Glutamate--tRNA ligase type 1 subfamily. Monomer. It depends on Zn(2+) as a cofactor.

Its subcellular location is the cytoplasm. The enzyme catalyses tRNA(Glu) + L-glutamate + ATP = L-glutamyl-tRNA(Glu) + AMP + diphosphate. Catalyzes the attachment of glutamate to tRNA(Glu) in a two-step reaction: glutamate is first activated by ATP to form Glu-AMP and then transferred to the acceptor end of tRNA(Glu). The chain is Glutamate--tRNA ligase from Yersinia pestis.